A 944-amino-acid chain; its full sequence is Valine--tRNA ligase (944 aa).

The 'HIGH' region signature appears at 43–53 (PNVTGTLHMGH). The 'KMSKS' region signature appears at 550 to 554 (KMSKS). Residue Lys-553 coordinates ATP. The stretch at 878–944 (LVDMDAERTR…TGLREQRAKL (67 aa)) forms a coiled coil.

The protein belongs to the class-I aminoacyl-tRNA synthetase family. ValS type 1 subfamily. As to quaternary structure, monomer.

It localises to the cytoplasm. It carries out the reaction tRNA(Val) + L-valine + ATP = L-valyl-tRNA(Val) + AMP + diphosphate. In terms of biological role, catalyzes the attachment of valine to tRNA(Val). As ValRS can inadvertently accommodate and process structurally similar amino acids such as threonine, to avoid such errors, it has a 'posttransfer' editing activity that hydrolyzes mischarged Thr-tRNA(Val) in a tRNA-dependent manner. The polypeptide is Valine--tRNA ligase (Xanthomonas campestris pv. campestris (strain 8004)).